A 210-amino-acid chain; its full sequence is Thymidylate kinase (210 aa).

Residue G10–S17 participates in ATP binding.

Belongs to the thymidylate kinase family.

The catalysed reaction is dTMP + ATP = dTDP + ADP. In terms of biological role, phosphorylation of dTMP to form dTDP in both de novo and salvage pathways of dTTP synthesis. The protein is Thymidylate kinase of Pseudomonas putida (strain ATCC 700007 / DSM 6899 / JCM 31910 / BCRC 17059 / LMG 24140 / F1).